The following is a 262-amino-acid chain: Inactive snake venom serine proteinase 13 (262 aa).

Positions 1–18 (MGLIRVLANLLILQLSYA) are cleaved as a signal peptide. A propeptide spanning residues 19–24 (QKSSEL) is cleaved from the precursor. One can recognise a Peptidase S1 domain in the interval 25–250 (VIGGDECNIN…HLDWIQSIIA (226 aa)). Cystine bridges form between Cys31–Cys162, Cys49–Cys65, Cys97–Cys257, Cys141–Cys211, Cys173–Cys190, and Cys201–Cys226. N-linked (GlcNAc...) asparagine glycosylation is found at Asn78, Asn102, and Asn153.

This sequence belongs to the peptidase S1 family. Snake venom subfamily. As to quaternary structure, monomer. As to expression, expressed by the venom gland.

The protein resides in the secreted. This chain is Inactive snake venom serine proteinase 13, found in Crotalus adamanteus (Eastern diamondback rattlesnake).